A 444-amino-acid polypeptide reads, in one-letter code: tRNA-2-methylthio-N(6)-dimethylallyladenosine synthase (444 aa).

The MTTase N-terminal domain occupies 8–122 (KTFYIETFGC…LAEMLVQIES (115 aa)). Residues Cys17, Cys53, Cys85, Cys160, Cys164, and Cys167 each coordinate [4Fe-4S] cluster. The region spanning 146–376 (RGNAHRGYIT…MEHQREIQRA (231 aa)) is the Radical SAM core domain. The TRAM domain maps to 379–444 (RKHIGETIEV…PNSLVGELVG (66 aa)).

The protein belongs to the methylthiotransferase family. MiaB subfamily. In terms of assembly, monomer. [4Fe-4S] cluster is required as a cofactor.

It is found in the cytoplasm. It catalyses the reaction N(6)-dimethylallyladenosine(37) in tRNA + (sulfur carrier)-SH + AH2 + 2 S-adenosyl-L-methionine = 2-methylsulfanyl-N(6)-dimethylallyladenosine(37) in tRNA + (sulfur carrier)-H + 5'-deoxyadenosine + L-methionine + A + S-adenosyl-L-homocysteine + 2 H(+). Catalyzes the methylthiolation of N6-(dimethylallyl)adenosine (i(6)A), leading to the formation of 2-methylthio-N6-(dimethylallyl)adenosine (ms(2)i(6)A) at position 37 in tRNAs that read codons beginning with uridine. The chain is tRNA-2-methylthio-N(6)-dimethylallyladenosine synthase from Koribacter versatilis (strain Ellin345).